The sequence spans 70 residues: Beta-insect excitatory toxin LqqIT1 (70 aa).

The 64-residue stretch at 2–65 (KNGYAVDSSG…ISDARKKYCD (64 aa)) folds into the LCN-type CS-alpha/beta domain. Cystine bridges form between cysteine 16/cysteine 37, cysteine 22/cysteine 42, cysteine 26/cysteine 44, and cysteine 38/cysteine 64.

It belongs to the long (4 C-C) scorpion toxin superfamily. Sodium channel inhibitor family. Beta subfamily. Expressed by the venom gland.

The protein resides in the secreted. In terms of biological role, excitatory insect beta-toxins induce a spastic paralysis. They bind voltage-independently at site-4 of sodium channels (Nav) and shift the voltage of activation toward more negative potentials thereby affecting sodium channel activation and promoting spontaneous and repetitive firing. In vivo, this toxin induces a fast excitatory contraction paralysis on fly larvae. It is active only on insects. This is Beta-insect excitatory toxin LqqIT1 from Leiurus quinquestriatus quinquestriatus (Egyptian scorpion).